A 589-amino-acid polypeptide reads, in one-letter code: Glucose starvation modulator protein 1 (589 aa).

The zn(2)-C6 fungal-type DNA-binding region spans 20–48 (CVFCHQKHLQCSNERPCKNCVKRNIGHEC). Disordered stretches follow at residues 59 to 90 (LTGN…PSVA), 218 to 240 (NNSN…NPEP), and 340 to 362 (ANGQ…PGNG). Over residues 80–90 (TPITASSPSVA) the composition is skewed to polar residues. Over residues 347–357 (LLDHNKDDSRK) the composition is skewed to basic and acidic residues. Residues 471-542 (SLLDYKKLVE…FKFFKNIAVN (72 aa)) enclose the PAS domain.

Belongs to the ERT1/acuK family.

The protein localises to the nucleus. In terms of biological role, transcription factor which regulates nonfermentable carbon utilization. In Candida tropicalis (strain ATCC MYA-3404 / T1) (Yeast), this protein is Glucose starvation modulator protein 1 (GSM1).